The primary structure comprises 203 residues: Molybdenum cofactor guanylyltransferase (203 aa).

Residues 20-22 (LAG), lysine 33, asparagine 61, aspartate 78, and aspartate 108 contribute to the GTP site. Aspartate 108 is a binding site for Mg(2+).

The protein belongs to the MobA family. As to quaternary structure, monomer. Requires Mg(2+) as cofactor.

It localises to the cytoplasm. It catalyses the reaction Mo-molybdopterin + GTP + H(+) = Mo-molybdopterin guanine dinucleotide + diphosphate. In terms of biological role, transfers a GMP moiety from GTP to Mo-molybdopterin (Mo-MPT) cofactor (Moco or molybdenum cofactor) to form Mo-molybdopterin guanine dinucleotide (Mo-MGD) cofactor. The sequence is that of Molybdenum cofactor guanylyltransferase from Vibrio cholerae serotype O1 (strain ATCC 39315 / El Tor Inaba N16961).